The sequence spans 329 residues: Phenylalanine--tRNA ligase alpha subunit (329 aa).

A Mg(2+)-binding site is contributed by Glu254.

It belongs to the class-II aminoacyl-tRNA synthetase family. Phe-tRNA synthetase alpha subunit type 1 subfamily. As to quaternary structure, tetramer of two alpha and two beta subunits. Mg(2+) is required as a cofactor.

Its subcellular location is the cytoplasm. The enzyme catalyses tRNA(Phe) + L-phenylalanine + ATP = L-phenylalanyl-tRNA(Phe) + AMP + diphosphate + H(+). The sequence is that of Phenylalanine--tRNA ligase alpha subunit (pheS) from Haemophilus influenzae (strain ATCC 51907 / DSM 11121 / KW20 / Rd).